We begin with the raw amino-acid sequence, 427 residues long: Peptidase B (427 aa).

Mn(2+)-binding residues include Lys-195 and Asp-200. Lys-207 is an active-site residue. Positions 218, 277, and 279 each coordinate Mn(2+). The active site involves Arg-281.

The protein belongs to the peptidase M17 family. As to quaternary structure, homohexamer. The cofactor is Mn(2+).

The protein resides in the cytoplasm. The enzyme catalyses Release of an N-terminal amino acid, Xaa, from a peptide or arylamide. Xaa is preferably Glu or Asp but may be other amino acids, including Leu, Met, His, Cys and Gln.. Probably plays an important role in intracellular peptide degradation. The protein is Peptidase B of Shigella flexneri serotype 5b (strain 8401).